The primary structure comprises 593 residues: ATP-dependent lipid A-core flippase (593 aa).

The next 6 helical transmembrane spans lie at 33-53 (IGIV…EAGI), 75-95 (WYVP…QYTS), 137-157 (AIVF…VTLV), 164-184 (IFLL…VAVI), 262-282 (QPLT…IAVV), and 292-312 (GGFV…KHLI). Residues 37 to 320 (VLAVVTMGVV…LIDVNQPLQR (284 aa)) enclose the ABC transmembrane type-1 domain. The 235-residue stretch at 352 to 586 (IEFRAVSFDY…GGLYAHLHRI (235 aa)) folds into the ABC transporter domain. 386–393 (GPSGSGKT) serves as a coordination point for ATP.

Belongs to the ABC transporter superfamily. Lipid exporter (TC 3.A.1.106) family. Homodimer.

It localises to the cell inner membrane. The catalysed reaction is ATP + H2O + lipid A-core oligosaccharideSide 1 = ADP + phosphate + lipid A-core oligosaccharideSide 2.. Involved in lipopolysaccharide (LPS) biosynthesis. Translocates lipid A-core from the inner to the outer leaflet of the inner membrane. Transmembrane domains (TMD) form a pore in the inner membrane and the ATP-binding domain (NBD) is responsible for energy generation. This is ATP-dependent lipid A-core flippase from Burkholderia orbicola (strain AU 1054).